Reading from the N-terminus, the 390-residue chain is Dual-specificity RNA methyltransferase RlmN (390 aa).

Glutamate 126 functions as the Proton acceptor in the catalytic mechanism. The region spanning 134–374 (TEDRGAVCLS…APVRTPRGQD (241 aa)) is the Radical SAM core domain. A disulfide bond links cysteine 141 and cysteine 379. The [4Fe-4S] cluster site is built by cysteine 148, cysteine 152, and cysteine 155. S-adenosyl-L-methionine contacts are provided by residues 205–206 (GE), serine 237, 259–261 (SLH), and asparagine 336. Cysteine 379 functions as the S-methylcysteine intermediate in the catalytic mechanism.

Belongs to the radical SAM superfamily. RlmN family. It depends on [4Fe-4S] cluster as a cofactor.

The protein localises to the cytoplasm. The catalysed reaction is adenosine(2503) in 23S rRNA + 2 reduced [2Fe-2S]-[ferredoxin] + 2 S-adenosyl-L-methionine = 2-methyladenosine(2503) in 23S rRNA + 5'-deoxyadenosine + L-methionine + 2 oxidized [2Fe-2S]-[ferredoxin] + S-adenosyl-L-homocysteine. It catalyses the reaction adenosine(37) in tRNA + 2 reduced [2Fe-2S]-[ferredoxin] + 2 S-adenosyl-L-methionine = 2-methyladenosine(37) in tRNA + 5'-deoxyadenosine + L-methionine + 2 oxidized [2Fe-2S]-[ferredoxin] + S-adenosyl-L-homocysteine. Specifically methylates position 2 of adenine 2503 in 23S rRNA and position 2 of adenine 37 in tRNAs. m2A2503 modification seems to play a crucial role in the proofreading step occurring at the peptidyl transferase center and thus would serve to optimize ribosomal fidelity. In Acidiphilium cryptum (strain JF-5), this protein is Dual-specificity RNA methyltransferase RlmN.